The primary structure comprises 280 residues: Dual adapter for phosphotyrosine and 3-phosphotyrosine and 3-phosphoinositide (280 aa).

Residues 1–20 (MGRAELLEGKMSTQDPSDLW) form a disordered region. The 95-residue stretch at 35–129 (WYHGNLTRHA…GTLMVLKHPY (95 aa)) folds into the SH2 domain. Residue Y139 is modified to Phosphotyrosine. Residue S141 is modified to Phosphoserine. Residues 164–259 (LGTKEGYLTK…WIKILRWKLS (96 aa)) form the PH domain.

As to quaternary structure, interacts with PtdIns(3,4,5)P3 and PLCG2. In vitro, interacts with PtdIns(3,4)P2. In terms of processing, phosphorylated on tyrosine residues. Highly expressed in placenta and lung, followed by brain, heart, kidney, liver, pancreas and skeletal muscle. Expressed by B-lymphocytes, but not T-lymphocytes or nonhematopoietic cells.

It is found in the cytoplasm. The protein localises to the membrane. Functionally, may act as a B-cell-associated adapter that regulates B-cell antigen receptor (BCR)-signaling downstream of PI3K. This Homo sapiens (Human) protein is Dual adapter for phosphotyrosine and 3-phosphotyrosine and 3-phosphoinositide (DAPP1).